A 524-amino-acid polypeptide reads, in one-letter code: Protein hunchback (524 aa).

Disordered regions lie at residues 42–86 and 101–187; these read IVKR…PQTQ and YNHN…DEQS. Residues 59–75 are compositionally biased toward low complexity; sequence SGSDFHSSSPSSDTSQD. Residues 76-86 show a composition bias toward polar residues; the sequence is LQHSYQSPQTQ. 3 stretches are compositionally biased toward basic and acidic residues: residues 118–127, 138–154, and 164–178; these read KSEKEEKDME, RKPD…EMSL, and TSEH…KSDN. 4 C2H2-type zinc fingers span residues 202-224, 231-253, 259-281, and 298-311; these read FKCK…SKVH, LTCP…LRNH, FQCN…MKSH, and YCHS…RYGH. The segment at 402 to 442 is disordered; the sequence is DLSKPGCSYTGEQKSRRKGPAFKVDPTQVESEEEDEETSTT. 2 consecutive C2H2-type zinc fingers follow at residues 471–493 and 499–523; these read NSCQ…MGYH and FTCN…RVSH.

Belongs to the hunchback C2H2-type zinc-finger protein family.

The protein resides in the nucleus. In terms of biological role, gap class segmentation protein that controls development of head structures. In Tribolium castaneum (Red flour beetle), this protein is Protein hunchback (hb).